The following is a 268-amino-acid chain: Proenkephalin-A (268 aa).

The first 24 residues, 1–24 (MARFLRLCTWLLVLGSCLLATVQA), serve as a signal peptide directing secretion. 3 cysteine pairs are disulfide-bonded: Cys26–Cys48, Cys30–Cys52, and Cys33–Cys65. The disordered stretch occupies residues 162–185 (GTGDNRAREGRHQESTDNDDNMSK). Residues 166–176 (NRAREGRHQES) are compositionally biased toward basic and acidic residues. Propeptides lie at residues 197–208 (SPQVEDEAKELQ) and 218–228 (VGRPEWWMDYQ). At Ser252 the chain carries Phosphoserine.

The protein belongs to the opioid neuropeptide precursor family. Post-translationally, proenkephalin-A is cleaved by CTSL to generate Met-enkephalin. In terms of processing, processed and degraded by ACE. Probably cleaved by ACE. Post-translationally, processed by ACE to generate Met-enkephalin in the nucleus accumbens of the brain. In terms of processing, the N-terminal domain contains 6 conserved cysteines thought to be involved in disulfide bonding and/or processing.

Its subcellular location is the cytoplasmic vesicle. The protein localises to the secretory vesicle. It localises to the chromaffin granule lumen. It is found in the secreted. Neuropeptide that competes with and mimic the effects of opiate drugs. They play a role in a number of physiologic functions, including pain perception and responses to stress. In terms of biological role, met-enkephalin-Arg-Phe neuropeptide acts as a strong ligand of Mu-type opioid receptor OPRM1. Met-enkephalin-Arg-Phe-binding to OPRM1 in the nucleus accumbens of the brain increases activation of OPRM1, leading to long-term synaptic depression of glutamate release. Its function is as follows. Increases glutamate release in the striatum and decreases GABA concentration in the striatum. Functionally, increases glutamate release in the striatum. The sequence is that of Proenkephalin-A (PENK) from Mesocricetus auratus (Golden hamster).